The chain runs to 483 residues: Protein PLASTID TRANSCRIPTIONALLY ACTIVE 14 (483 aa).

The N-terminal 62 residues, 1–62, are a transit peptide targeting the chloroplast; sequence MASSVSLQFL…TQPFPLFQSP (62 aa). Residues 80–325 form the SET domain; that stretch reads YKIGYVRSVR…KGEEMTINYM (246 aa). An S-adenosyl-L-methionine-binding site is contributed by Tyr-324.

It belongs to the class V-like SAM-binding methyltransferase superfamily. In terms of assembly, component of the transcriptionally active chromosome (TAC) complexes. Interacts with PTAC12/HMR/PAP5 and PTAC7. Binds to SL1/MTERF3. As to expression, mostly expressed in leaves, flowers and seedlings, and, to a lower extent, in stems and roots.

Its subcellular location is the plastid. The protein localises to the chloroplast thylakoid. Its function is as follows. Essential for chloroplast development, especially for thylakoid formation. Involved in plastid gene expression, probably by maintaining plastid-encoded RNA polymerase (PEP) activity. This chain is Protein PLASTID TRANSCRIPTIONALLY ACTIVE 14, found in Arabidopsis thaliana (Mouse-ear cress).